Consider the following 169-residue polypeptide: S-ribosylhomocysteine lyase (169 aa).

Fe cation-binding residues include His54, His58, and Cys128.

It belongs to the LuxS family. Homodimer. The cofactor is Fe cation.

It carries out the reaction S-(5-deoxy-D-ribos-5-yl)-L-homocysteine = (S)-4,5-dihydroxypentane-2,3-dione + L-homocysteine. Involved in the synthesis of autoinducer 2 (AI-2) which is secreted by bacteria and is used to communicate both the cell density and the metabolic potential of the environment. The regulation of gene expression in response to changes in cell density is called quorum sensing. Catalyzes the transformation of S-ribosylhomocysteine (RHC) to homocysteine (HC) and 4,5-dihydroxy-2,3-pentadione (DPD). This chain is S-ribosylhomocysteine lyase, found in Shewanella woodyi (strain ATCC 51908 / MS32).